The chain runs to 67 residues: Small ribosomal subunit protein eS31 (67 aa).

Positions 31, 34, 49, and 52 each coordinate Zn(2+). A C4-type zinc finger spans residues 31 to 52; it reads CPKCGAGVFMAEHLNRFACGKC.

It belongs to the eukaryotic ribosomal protein eS31 family. As to quaternary structure, part of the 30S ribosomal subunit. Zn(2+) serves as cofactor.

The protein is Small ribosomal subunit protein eS31 of Methanococcus maripaludis (strain C7 / ATCC BAA-1331).